The chain runs to 496 residues: Glycerol kinase (496 aa).

Position 12 (threonine 12) interacts with ADP. ATP contacts are provided by threonine 12, threonine 13, and serine 14. Residue threonine 12 coordinates sn-glycerol 3-phosphate. Arginine 16 contacts ADP. The sn-glycerol 3-phosphate site is built by arginine 82, glutamate 83, and tyrosine 134. Glycerol-binding residues include arginine 82, glutamate 83, and tyrosine 134. Histidine 230 carries the phosphohistidine; by HPr modification. Aspartate 244 contacts sn-glycerol 3-phosphate. Residues aspartate 244 and glutamine 245 each coordinate glycerol. ADP-binding residues include threonine 266 and glycine 309. Threonine 266, glycine 309, glutamine 313, and glycine 410 together coordinate ATP. Residues glycine 410 and asparagine 414 each coordinate ADP.

This sequence belongs to the FGGY kinase family. Homotetramer and homodimer (in equilibrium). In terms of processing, the phosphoenolpyruvate-dependent sugar phosphotransferase system (PTS), including enzyme I, and histidine-containing protein (HPr) are required for the phosphorylation, which leads to the activation of the enzyme.

It carries out the reaction glycerol + ATP = sn-glycerol 3-phosphate + ADP + H(+). The protein operates within polyol metabolism; glycerol degradation via glycerol kinase pathway; sn-glycerol 3-phosphate from glycerol: step 1/1. With respect to regulation, activated by phosphorylation and inhibited by fructose 1,6-bisphosphate (FBP). In terms of biological role, key enzyme in the regulation of glycerol uptake and metabolism. Catalyzes the phosphorylation of glycerol to yield sn-glycerol 3-phosphate. The chain is Glycerol kinase from Geobacillus sp. (strain WCH70).